We begin with the raw amino-acid sequence, 538 residues long: Phosphoenolpyruvate carboxykinase (ATP) (538 aa).

3 residues coordinate substrate: Arg61, Tyr195, and Lys201. Residues Lys201, His220, and 236-244 (GLSGTGKTT) contribute to the ATP site. Mn(2+)-binding residues include Lys201 and His220. Residue Asp257 participates in Mn(2+) binding. Residues Glu285, Arg323, and Thr449 each coordinate ATP. Arg323 is a binding site for substrate.

Belongs to the phosphoenolpyruvate carboxykinase (ATP) family. Mn(2+) serves as cofactor.

It is found in the cytoplasm. The enzyme catalyses oxaloacetate + ATP = phosphoenolpyruvate + ADP + CO2. It participates in carbohydrate biosynthesis; gluconeogenesis. Functionally, involved in the gluconeogenesis. Catalyzes the conversion of oxaloacetate (OAA) to phosphoenolpyruvate (PEP) through direct phosphoryl transfer between the nucleoside triphosphate and OAA. This Nitrobacter winogradskyi (strain ATCC 25391 / DSM 10237 / CIP 104748 / NCIMB 11846 / Nb-255) protein is Phosphoenolpyruvate carboxykinase (ATP).